The sequence spans 416 residues: UDP-N-acetylmuramoylalanine--D-glutamate ligase (416 aa).

108-114 (GTVGKTT) lines the ATP pocket.

The protein belongs to the MurCDEF family.

It is found in the cytoplasm. It catalyses the reaction UDP-N-acetyl-alpha-D-muramoyl-L-alanine + D-glutamate + ATP = UDP-N-acetyl-alpha-D-muramoyl-L-alanyl-D-glutamate + ADP + phosphate + H(+). The protein operates within cell wall biogenesis; peptidoglycan biosynthesis. Functionally, cell wall formation. Catalyzes the addition of glutamate to the nucleotide precursor UDP-N-acetylmuramoyl-L-alanine (UMA). This Chlamydia muridarum (strain MoPn / Nigg) protein is UDP-N-acetylmuramoylalanine--D-glutamate ligase.